A 400-amino-acid polypeptide reads, in one-letter code: Keratin, type I cytoskeletal 19 (400 aa).

Residues 1–79 form a head region; that stretch reads MTSYSYRQSS…TASDGLLAGN (79 aa). Arg7 bears the Omega-N-methylarginine mark. 2 positions are modified to phosphoserine: Ser14 and Ser22. Arg24 is modified (asymmetric dimethylarginine; alternate). An Omega-N-methylarginine; alternate modification is found at Arg24. Arg32 is modified (omega-N-methylarginine). Phosphoserine occurs at positions 35 and 40. Arg43 and Arg51 each carry omega-N-methylarginine. Phosphoserine occurs at positions 57 and 72. Residues 80-115 form a coil 1A region; sequence EKLTMQNLNDRLASYLDKVRALEAANGELEVKIRDW. The region spanning 80–391 is the IF rod domain; it reads EKLTMQNLND…SLLEGQEDHY (312 aa). A linker 1 region spans residues 116–133; that stretch reads YQKQGPGPSRDYSHYYTT. Residues 134–225 form a coil 1B region; the sequence is IQDLRDKILG…KNHEEEISTL (92 aa). The segment at 226-248 is linker 12; sequence RGQVGGQVSVEVDSAPGTDLAKI. The segment at 244–390 is necessary for interaction with PNN; sequence DLAKILSDMR…RSLLEGQEDH (147 aa). Residues 249–387 are coil 2; sequence LSDMRSQYEV…ATYRSLLEGQ (139 aa). The residue at position 323 (Thr323) is a Phosphothreonine. The segment at 388–400 is rod-like helical tail; sequence EDHYSNLSASKVL. Phosphotyrosine is present on Tyr391. Ser395 bears the Phosphoserine mark.

This sequence belongs to the intermediate filament family. As to quaternary structure, heterotetramer of two type I and two type II keratins. Interacts with PNN and the actin-binding domain of DMD.

In terms of biological role, involved in the organization of myofibers. Together with KRT8, helps to link the contractile apparatus to dystrophin at the costameres of striated muscle. The chain is Keratin, type I cytoskeletal 19 from Pongo abelii (Sumatran orangutan).